The chain runs to 341 residues: DNA repair protein XRCC3 (341 aa).

Methionine 1 carries the post-translational modification N-acetylmethionine. Residue glycine 107–threonine 114 participates in ATP binding.

It belongs to the RecA family. RAD51 subfamily. Interacts with RAD51C and RAD51. Part of the CX3 complex consisting of RAD51C and XRCC3; the complex has a ring-like structure arranged into a flat disc around a central channel; CX3 can interact with RAD51 in vitro. Forms a complex with FANCD2, BRCA2 and phosphorylated FANCG. Interacts with SWSAP1 and ZSWIM7; involved in homologous recombination repair. Interacts directly with PALB2 which may serve as a scaffold for a HR complex containing PALB2, BRCA2, RAD51C, RAD51 and XRCC3.

The protein localises to the nucleus. Its subcellular location is the cytoplasm. It is found in the perinuclear region. The protein resides in the mitochondrion matrix. In terms of biological role, involved in the homologous recombination repair (HRR) pathway of double-stranded DNA, thought to repair chromosomal fragmentation, translocations and deletions. Part of the RAD21 paralog protein complex CX3 which acts in the BRCA1-BRCA2-dependent HR pathway. Upon DNA damage, CX3 acts downstream of RAD51 recruitment; the complex binds predominantly to the intersection of the four duplex arms of the Holliday junction (HJ) and to junctions of replication forks. Involved in HJ resolution and thus in processing HR intermediates late in the DNA repair process; the function may be linked to the CX3 complex and seems to involve GEN1 during mitotic cell cycle progression. Part of a PALB2-scaffolded HR complex containing BRCA2 and RAD51C and which is thought to play a role in DNA repair by HR. Plays a role in regulating mitochondrial DNA copy number under conditions of oxidative stress in the presence of RAD51 and RAD51C. The chain is DNA repair protein XRCC3 (XRCC3) from Bos taurus (Bovine).